We begin with the raw amino-acid sequence, 138 residues long: FUN14 domain-containing protein fndc-1 (138 aa).

A run of 2 helical transmembrane segments spans residues 37-56 (PMVQ…YFVT) and 61-78 (LVAA…FAIH). 2 N-linked (GlcNAc...) asparagine glycosylation sites follow: Asn-85 and Asn-111.

It belongs to the FUN14 family. Broadly expressed in somatic tissues. Expressed in the hermaphrodite spermatheca and male gonad. Expressed in spermatids, but not expressed in oocytes.

The protein localises to the mitochondrion outer membrane. In terms of biological role, mitophagy receptor which plays a role in paternal mitochondria degradation in embryos after the two-cell stage. This Caenorhabditis elegans protein is FUN14 domain-containing protein fndc-1.